The primary structure comprises 250 residues: Acetylglutamate kinase (250 aa).

Substrate-binding positions include Gly41 to Gly42, Arg63, and Asn156.

It belongs to the acetylglutamate kinase family. ArgB subfamily.

The protein localises to the cytoplasm. The enzyme catalyses N-acetyl-L-glutamate + ATP = N-acetyl-L-glutamyl 5-phosphate + ADP. The protein operates within amino-acid biosynthesis; L-arginine biosynthesis; N(2)-acetyl-L-ornithine from L-glutamate: step 2/4. Functionally, catalyzes the ATP-dependent phosphorylation of N-acetyl-L-glutamate. This is Acetylglutamate kinase from Listeria welshimeri serovar 6b (strain ATCC 35897 / DSM 20650 / CCUG 15529 / CIP 8149 / NCTC 11857 / SLCC 5334 / V8).